Consider the following 149-residue polypeptide: Large ribosomal subunit protein uL15 (149 aa).

Basic residues-rich tracts occupy residues 1-14 (MPTR…HRGH) and 21-30 (RVGKHRKHPG). The tract at residues 1-43 (MPTRFSKTRKHRGHVSAGKGRVGKHRKHPGGRGMAGGQHHHRT) is disordered.

Belongs to the universal ribosomal protein uL15 family. As to quaternary structure, component of the large ribosomal subunit (LSU). Mature N.crassa ribosomes consist of a small (40S) and a large (60S) subunit. The 40S small subunit contains 1 molecule of ribosomal RNA (18S rRNA) and at least 32 different proteins. The large 60S subunit contains 3 rRNA molecules (26S, 5.8S and 5S rRNA) and at least 42 different proteins.

The protein localises to the cytoplasm. In terms of biological role, component of the ribosome, a large ribonucleoprotein complex responsible for the synthesis of proteins in the cell. The small ribosomal subunit (SSU) binds messenger RNAs (mRNAs) and translates the encoded message by selecting cognate aminoacyl-transfer RNA (tRNA) molecules. The large subunit (LSU) contains the ribosomal catalytic site termed the peptidyl transferase center (PTC), which catalyzes the formation of peptide bonds, thereby polymerizing the amino acids delivered by tRNAs into a polypeptide chain. The nascent polypeptides leave the ribosome through a tunnel in the LSU and interact with protein factors that function in enzymatic processing, targeting, and the membrane insertion of nascent chains at the exit of the ribosomal tunnel. This chain is Large ribosomal subunit protein uL15 (rpl-28), found in Neurospora crassa (strain ATCC 24698 / 74-OR23-1A / CBS 708.71 / DSM 1257 / FGSC 987).